The sequence spans 148 residues: 3-dehydroquinate dehydratase (148 aa).

Tyr-23 acts as the Proton acceptor in catalysis. Substrate contacts are provided by Asn-75, His-81, and Asp-88. Catalysis depends on His-101, which acts as the Proton donor. Substrate is bound by residues 102 to 103 and Arg-112; that span reads LS.

The protein belongs to the type-II 3-dehydroquinase family. In terms of assembly, homododecamer.

It carries out the reaction 3-dehydroquinate = 3-dehydroshikimate + H2O. It functions in the pathway metabolic intermediate biosynthesis; chorismate biosynthesis; chorismate from D-erythrose 4-phosphate and phosphoenolpyruvate: step 3/7. In terms of biological role, catalyzes a trans-dehydration via an enolate intermediate. The protein is 3-dehydroquinate dehydratase of Xylella fastidiosa (strain 9a5c).